The following is an 828-amino-acid chain: Transcription factor SOX-6 (828 aa).

The tract at residues 1–51 (MSSKQATSPFACAADGEDAMTQDLTSREKEEGSDQHVASHLPLHPIMHNKP) is disordered. A compositionally biased stretch (basic and acidic residues) spans 25–34 (TSREKEEGSD). Threonine 119 is modified (phosphothreonine). A coiled-coil region spans residues 184–262 (LAEKERQLST…LLQQQIQVQG (79 aa)). The interval 380–470 (SPGAKMPSTP…KSSIPSPIGG (91 aa)) is disordered. Positions 393–402 (NTAGTVSPTG) are enriched in polar residues. Serine 399 is subject to Phosphoserine. Threonine 401 is subject to Phosphothreonine. Residues lysine 404 and lysine 417 each participate in a glycyl lysine isopeptide (Lys-Gly) (interchain with G-Cter in SUMO) cross-link. A phosphoserine mark is found at serine 439 and serine 442. A compositionally biased stretch (polar residues) spans 439-461 (SPTSPTQNLFPASKTSPVNLPNK). Positions 621 to 689 (IKRPMNAFMV…IHLEKYPNYK (69 aa)) form a DNA-binding region, HMG box. Positions 753–781 (TPSPQMTSDCSSTSASPEPSLPVIQSTYG) are enriched in polar residues. The segment at 753-828 (TPSPQMTSDC…NEAPEAVSAN (76 aa)) is disordered. The segment covering 796 to 809 (NGEDEMEMYDDYED) has biased composition (acidic residues).

In terms of assembly, homodimer. Interacts with DAZAP2. May interact with CENPK. Sumoylation inhibits the transcriptional activity. As to expression, expressed in a wide variety of tissues, most abundantly in skeletal musclen.

The protein resides in the nucleus. It is found in the cytoplasm. Its function is as follows. Transcription factor that plays a key role in several developmental processes, including neurogenesis, chondrocytes differentiation and cartilage formation. Specifically binds the 5'-AACAAT-3' DNA motif present in enhancers and super-enhancers and promotes expression of genes important for chondrogenesis. Required for overt chondrogenesis when condensed prechondrocytes differentiate into early stage chondrocytes: SOX5 and SOX6 cooperatively bind with SOX9 on active enhancers and super-enhancers associated with cartilage-specific genes, and thereby potentiate SOX9's ability to transactivate. Not involved in precartilaginous condensation, the first step in chondrogenesis, during which skeletal progenitors differentiate into prechondrocytes. Together with SOX5, required to form and maintain a pool of highly proliferating chondroblasts between epiphyses and metaphyses, to form columnar chondroblasts, delay chondrocyte prehypertrophy but promote hypertrophy, and to delay terminal differentiation of chondrocytes on contact with ossification fronts. Binds to the proximal promoter region of the myelin protein MPZ gene, and is thereby involved in the differentiation of oligodendroglia in the developing spinal tube. Binds to the gene promoter of MBP and acts as a transcriptional repressor. This is Transcription factor SOX-6 from Homo sapiens (Human).